The primary structure comprises 502 residues: ATP synthase subunit alpha (502 aa).

The interval 115 to 134 (IDGQGPINTTKTRPVEQKAT) is disordered. Position 169–176 (169–176 (GDRQTGKT)) interacts with ATP.

The protein belongs to the ATPase alpha/beta chains family. As to quaternary structure, F-type ATPases have 2 components, CF(1) - the catalytic core - and CF(0) - the membrane proton channel. CF(1) has five subunits: alpha(3), beta(3), gamma(1), delta(1), epsilon(1). CF(0) has three main subunits: a(1), b(2) and c(9-12). The alpha and beta chains form an alternating ring which encloses part of the gamma chain. CF(1) is attached to CF(0) by a central stalk formed by the gamma and epsilon chains, while a peripheral stalk is formed by the delta and b chains.

The protein localises to the cell membrane. It catalyses the reaction ATP + H2O + 4 H(+)(in) = ADP + phosphate + 5 H(+)(out). Functionally, produces ATP from ADP in the presence of a proton gradient across the membrane. The alpha chain is a regulatory subunit. In Staphylococcus haemolyticus (strain JCSC1435), this protein is ATP synthase subunit alpha.